The primary structure comprises 106 residues: UPF0145 protein VCM66_A0911 (106 aa).

It belongs to the UPF0145 family.

This chain is UPF0145 protein VCM66_A0911, found in Vibrio cholerae serotype O1 (strain M66-2).